A 363-amino-acid chain; its full sequence is Pyrimidine monooxygenase RutA (363 aa).

Residues 49-50 (IK), asparagine 115, glutamate 124, 140-141 (RY), and serine 190 each bind FMN.

The protein belongs to the NtaA/SnaA/DszA monooxygenase family. RutA subfamily.

It catalyses the reaction uracil + FMNH2 + NADH + O2 = (Z)-3-ureidoacrylate + FMN + NAD(+) + H2O + H(+). It carries out the reaction thymine + FMNH2 + NADH + O2 = (Z)-2-methylureidoacrylate + FMN + NAD(+) + H2O + H(+). In terms of biological role, catalyzes the pyrimidine ring opening between N-3 and C-4 by an unusual flavin hydroperoxide-catalyzed mechanism, adding oxygen atoms in the process to yield ureidoacrylate peracid, that immediately reacts with FMN forming ureidoacrylate and FMN-N(5)-oxide. The FMN-N(5)-oxide reacts spontaneously with NADH to produce FMN. Requires the flavin reductase RutF to regenerate FMN in vivo. In Enterobacter sp. (strain 638), this protein is Pyrimidine monooxygenase RutA.